The sequence spans 191 residues: Protein Ves (191 aa).

This sequence belongs to the Ves family.

The chain is Protein Ves from Escherichia coli O127:H6 (strain E2348/69 / EPEC).